Here is a 513-residue protein sequence, read N- to C-terminus: ATP synthase subunit alpha (513 aa).

169–176 serves as a coordination point for ATP; the sequence is GDRQTGKT.

This sequence belongs to the ATPase alpha/beta chains family. In terms of assembly, F-type ATPases have 2 components, CF(1) - the catalytic core - and CF(0) - the membrane proton channel. CF(1) has five subunits: alpha(3), beta(3), gamma(1), delta(1), epsilon(1). CF(0) has three main subunits: a(1), b(2) and c(9-12). The alpha and beta chains form an alternating ring which encloses part of the gamma chain. CF(1) is attached to CF(0) by a central stalk formed by the gamma and epsilon chains, while a peripheral stalk is formed by the delta and b chains.

It localises to the cell inner membrane. The catalysed reaction is ATP + H2O + 4 H(+)(in) = ADP + phosphate + 5 H(+)(out). In terms of biological role, produces ATP from ADP in the presence of a proton gradient across the membrane. The alpha chain is a regulatory subunit. The sequence is that of ATP synthase subunit alpha from Escherichia coli O81 (strain ED1a).